Here is a 237-residue protein sequence, read N- to C-terminus: UPF0758 protein Veis_1654 (237 aa).

Residues 115–237 (VFDTPDAVKH…ALSMAEMGLL (123 aa)) form the MPN domain. Zn(2+) is bound by residues H186, H188, and D199. Residues 186–199 (HNHPSGSVQPSRAD) carry the JAMM motif motif.

The protein belongs to the UPF0758 family.

The protein is UPF0758 protein Veis_1654 of Verminephrobacter eiseniae (strain EF01-2).